The chain runs to 203 residues: Guanylate kinase (203 aa).

One can recognise a Guanylate kinase-like domain in the interval 4–183 (GKLFVISAPS…ASTLLKSIIW (180 aa)). Residue 11-18 (APSGAGKT) coordinates ATP.

It belongs to the guanylate kinase family.

It localises to the cytoplasm. The enzyme catalyses GMP + ATP = GDP + ADP. Essential for recycling GMP and indirectly, cGMP. This is Guanylate kinase from Desulfotalea psychrophila (strain LSv54 / DSM 12343).